The primary structure comprises 296 residues: Mycothiol acetyltransferase (296 aa).

2 consecutive N-acetyltransferase domains span residues 17 to 146 (YNHR…AVYD) and 156 to 296 (LKTA…VYEK). Glu44 is a 1D-myo-inositol 2-(L-cysteinylamino)-2-deoxy-alpha-D-glucopyranoside binding site. Acetyl-CoA is bound at residue 81 to 83 (LAV). 3 residues coordinate 1D-myo-inositol 2-(L-cysteinylamino)-2-deoxy-alpha-D-glucopyranoside: Glu183, Lys222, and Glu230. Residues 234-236 (VGL) and 241-247 (RGKGLGD) each bind acetyl-CoA. Tyr268 lines the 1D-myo-inositol 2-(L-cysteinylamino)-2-deoxy-alpha-D-glucopyranoside pocket.

It belongs to the acetyltransferase family. MshD subfamily. Monomer.

It catalyses the reaction 1D-myo-inositol 2-(L-cysteinylamino)-2-deoxy-alpha-D-glucopyranoside + acetyl-CoA = mycothiol + CoA + H(+). Catalyzes the transfer of acetyl from acetyl-CoA to desacetylmycothiol (Cys-GlcN-Ins) to form mycothiol. This is Mycothiol acetyltransferase from Corynebacterium efficiens (strain DSM 44549 / YS-314 / AJ 12310 / JCM 11189 / NBRC 100395).